Here is a 427-residue protein sequence, read N- to C-terminus: Dihydroorotase (427 aa).

Residues histidine 58 and histidine 60 each coordinate Zn(2+). Substrate is bound by residues 60-62 (HLR) and asparagine 92. Residues aspartate 150, histidine 177, and histidine 230 each coordinate Zn(2+). Residue asparagine 276 participates in substrate binding. A Zn(2+)-binding site is contributed by aspartate 303. Residue aspartate 303 is part of the active site. Residues histidine 307 and 321–322 (FG) contribute to the substrate site.

Belongs to the metallo-dependent hydrolases superfamily. DHOase family. Class I DHOase subfamily. Zn(2+) is required as a cofactor.

It catalyses the reaction (S)-dihydroorotate + H2O = N-carbamoyl-L-aspartate + H(+). The protein operates within pyrimidine metabolism; UMP biosynthesis via de novo pathway; (S)-dihydroorotate from bicarbonate: step 3/3. Functionally, catalyzes the reversible cyclization of carbamoyl aspartate to dihydroorotate. The protein is Dihydroorotase of Macrococcus caseolyticus (strain JCSC5402) (Macrococcoides caseolyticum).